Consider the following 263-residue polypeptide: MYSLKDLCIQVAQKHVHDIDDIGDCPFELVKPILEKARPEHLIDLEEKSPHLKVDTQPLWKDHVLRDFGLELQKRTILNNIDDWRGLYGKLKKKRNAHYNVASAKLRSAYTKLEQSKQNKRIVPLEREPRAARPPKRPRPMSNYCPKSSLMARAKSDFLKKASATRHIVSATSSSRSFPQLHPLGRSSSNATNTSTKRPLTSNTYPSIPLPPKSFTSQNFKSFNAVKTQPSSSSSPSISRPTSFPMSFFPNPSRFSSQVPKRI.

Disordered stretches follow at residues Lys112–Lys147 and Ser170–Ile263. Polar residues-rich tracts occupy residues Arg186–Pro206 and Ser214–Gln229. Residues Pro230–Pro245 show a composition bias toward low complexity. The span at Ser253–Ile263 shows a compositional bias: polar residues.

This sequence belongs to the ELA1 family. In terms of assembly, heterodimer with elc1. Component of a CRL3 E3 ubiquitin ligase complex consisting of a cullin, the linker protein elc1, the substrate receptor pof4/ela1, and the RING protein rbx1. Interacts with skp1.

Functionally, as part of the CRL3 E3 ubiquitin ligase complex; polyubiquitylates monoubiquitylated RNA polymerase II subunit rpb1 to trigger its proteolysis; plays a role in global genomic repair. This Schizosaccharomyces pombe (strain 972 / ATCC 24843) (Fission yeast) protein is Elongin-A (pof4).